The primary structure comprises 249 residues: tRNA pseudouridine synthase A (249 aa).

The active-site Nucleophile is the aspartate 52. Tyrosine 110 serves as a coordination point for substrate.

The protein belongs to the tRNA pseudouridine synthase TruA family. Homodimer.

The catalysed reaction is uridine(38/39/40) in tRNA = pseudouridine(38/39/40) in tRNA. Its function is as follows. Formation of pseudouridine at positions 38, 39 and 40 in the anticodon stem and loop of transfer RNAs. In Syntrophomonas wolfei subsp. wolfei (strain DSM 2245B / Goettingen), this protein is tRNA pseudouridine synthase A.